A 276-amino-acid polypeptide reads, in one-letter code: C-type lectin domain family 12 member B (276 aa).

Over 1 to 43 (MSEEVTYATLTFQDSAGARNNRDGNNLRKRGHPAPSPIWRHAA) the chain is Cytoplasmic. Positions 5–10 (VTYATL) match the ITIM motif motif. Position 7 is a phosphotyrosine (Tyr7). The chain crosses the membrane as a helical; Signal-anchor for type II membrane protein span at residues 44 to 64 (LGLVTLCLMLLIGLVTLGMMF). The Extracellular portion of the chain corresponds to 65–276 (LQISNDINSD…AAPVKTEDLD (212 aa)). Asn91, Asn176, and Asn237 each carry an N-linked (GlcNAc...) asparagine glycan. Residues 150–264 (YQNSCYYFTT…CSAEIFWICE (115 aa)) form the C-type lectin domain. Intrachain disulfides connect Cys172–Cys263 and Cys242–Cys255.

As to quaternary structure, homodimer. Interacts (via ITIM motif) with PTPN6. Interacts (via ITIM motif) with PTPN11; this interaction triggers dephosphorylation and activation of PTPN11. In terms of processing, N-glycosylated. As to expression, detected in colon, heart, kidney, liver, lung, mammary gland, ovary, spleen and testis. Expressed in melanocytes (at protein level).

The protein localises to the cell membrane. Inhibitory receptor postulated to negatively regulate immune and non-immune functions. Upon phosphorylation, recruits SH2 domain-containing PTPN6 and PTPN11 phosphatases to its ITIM motif and antagonizes activation signals. Although it inhibits KLRK1/NKG2D-mediated signaling, it does not bind known ligands of KLRK1/NKG2D and therefore is not its inhibitory counterpart. May limit activation of myeloid cell subsets in response to infection or tissue inflammation. May protect target cells against natural killer cell-mediated lysis. May negatively regulate cell cycle and differentiation of melanocytes via inactivation of STAT3. The protein is C-type lectin domain family 12 member B of Homo sapiens (Human).